Consider the following 233-residue polypeptide: Large ribosomal subunit protein uL1 (233 aa).

Belongs to the universal ribosomal protein uL1 family. In terms of assembly, part of the 50S ribosomal subunit.

Binds directly to 23S rRNA. The L1 stalk is quite mobile in the ribosome, and is involved in E site tRNA release. Functionally, protein L1 is also a translational repressor protein, it controls the translation of the L11 operon by binding to its mRNA. The protein is Large ribosomal subunit protein uL1 of Vibrio cholerae serotype O1 (strain ATCC 39315 / El Tor Inaba N16961).